The chain runs to 775 residues: Subtilisin-like protease SBT1.2 (775 aa).

The N-terminal stretch at 1–20 (MEPKPFFLCIIFLLFCSSSS) is a signal peptide. The region spanning 27 to 111 (TYIVQLHPNS…AVRPDHVLQV (85 aa)) is the Inhibitor I9 domain. Residues 116 to 618 (SYKFLGLDGF…AGHVNPQKAI (503 aa)) enclose the Peptidase S8 domain. Active-site charge relay system residues include D146 and H222. The PA domain maps to 388 to 470 (GGDKGSEFCL…YTESVLLKAY (83 aa)). N-linked (GlcNAc...) asparagine glycans are attached at residues N472 and N544. Catalysis depends on S552, which acts as the Charge relay system. N-linked (GlcNAc...) asparagine glycosylation is present at N652.

This sequence belongs to the peptidase S8 family. As to expression, mostly expressed in leaves and cotyledons (especially in epidermal cells), and, to a lower extent, in floral buds, stems, and siliques. Strongly expressed in stomatal precursor cells (meristemoids and guard mother cells).

Its subcellular location is the secreted. It is found in the extracellular space. The protein resides in the apoplast. The protein localises to the cell membrane. In terms of biological role, serine protease involved in the negative regulation of stomatal density and distribution. Not active on EPFL6 (AC Q1PEY6). Positive regulator of water use efficiency (WUE). This Arabidopsis thaliana (Mouse-ear cress) protein is Subtilisin-like protease SBT1.2.